The sequence spans 152 residues: Transcriptional regulator MraZ (152 aa).

SpoVT-AbrB domains lie at 5-52 and 81-124; these read VNQL…PLPE and AQEL…DESL.

The protein belongs to the MraZ family. Forms oligomers.

The protein resides in the cytoplasm. It is found in the nucleoid. This Halorhodospira halophila (strain DSM 244 / SL1) (Ectothiorhodospira halophila (strain DSM 244 / SL1)) protein is Transcriptional regulator MraZ.